A 1379-amino-acid polypeptide reads, in one-letter code: DNA-directed RNA polymerase subunit beta (1379 aa).

This sequence belongs to the RNA polymerase beta chain family. In terms of assembly, the RNAP catalytic core consists of 2 alpha, 1 beta, 1 beta' and 1 omega subunit. When a sigma factor is associated with the core the holoenzyme is formed, which can initiate transcription.

The catalysed reaction is RNA(n) + a ribonucleoside 5'-triphosphate = RNA(n+1) + diphosphate. DNA-dependent RNA polymerase catalyzes the transcription of DNA into RNA using the four ribonucleoside triphosphates as substrates. This is DNA-directed RNA polymerase subunit beta from Rhizobium johnstonii (strain DSM 114642 / LMG 32736 / 3841) (Rhizobium leguminosarum bv. viciae).